We begin with the raw amino-acid sequence, 240 residues long: UDP-2,3-diacylglucosamine hydrolase (240 aa).

Mn(2+)-binding residues include Asp-8, His-10, Asp-41, Asn-79, and His-114. Asn-79–Arg-80 serves as a coordination point for substrate. Residues Asp-122, Ser-160, Thr-164, Lys-167, and His-195 each contribute to the substrate site. The Mn(2+) site is built by His-195 and His-197.

Belongs to the LpxH family. Requires Mn(2+) as cofactor.

It is found in the cell inner membrane. It catalyses the reaction UDP-2-N,3-O-bis[(3R)-3-hydroxytetradecanoyl]-alpha-D-glucosamine + H2O = 2-N,3-O-bis[(3R)-3-hydroxytetradecanoyl]-alpha-D-glucosaminyl 1-phosphate + UMP + 2 H(+). The protein operates within glycolipid biosynthesis; lipid IV(A) biosynthesis; lipid IV(A) from (3R)-3-hydroxytetradecanoyl-[acyl-carrier-protein] and UDP-N-acetyl-alpha-D-glucosamine: step 4/6. Functionally, hydrolyzes the pyrophosphate bond of UDP-2,3-diacylglucosamine to yield 2,3-diacylglucosamine 1-phosphate (lipid X) and UMP by catalyzing the attack of water at the alpha-P atom. Involved in the biosynthesis of lipid A, a phosphorylated glycolipid that anchors the lipopolysaccharide to the outer membrane of the cell. In Pseudomonas paraeruginosa (strain DSM 24068 / PA7) (Pseudomonas aeruginosa (strain PA7)), this protein is UDP-2,3-diacylglucosamine hydrolase.